The sequence spans 149 residues: Small ribosomal subunit protein bS6 (149 aa).

The segment at 94–149 is disordered; it reads EKHEEGPSAMMQKRDRDDRPRRDGDRPDRGGFGDRGPRPDRGDRDDRPRRPREDRA.

This sequence belongs to the bacterial ribosomal protein bS6 family.

In terms of biological role, binds together with bS18 to 16S ribosomal RNA. The sequence is that of Small ribosomal subunit protein bS6 from Sinorhizobium fredii (strain NBRC 101917 / NGR234).